The chain runs to 340 residues: Chitinase 2 (340 aa).

Residues 1-32 form the signal peptide; sequence MSTPRAAASLAKKAALVALAVLAAALATAARA. The Chitin-binding type-1 domain maps to 33–73; the sequence is EQCGAQAGGARCPNCLCCSRWGWCGTTSDFCGDGCQSQCSG. 8 disulfide bridges follow: cysteine 35–cysteine 50, cysteine 44–cysteine 56, cysteine 47–cysteine 74, cysteine 49–cysteine 63, cysteine 67–cysteine 71, cysteine 110–cysteine 172, cysteine 184–cysteine 192, and cysteine 291–cysteine 323. The active-site Proton donor is the glutamate 154.

The protein belongs to the glycosyl hydrolase 19 family. Chitinase class I subfamily. As to expression, expressed in roots, sheaths and meristems.

The catalysed reaction is Random endo-hydrolysis of N-acetyl-beta-D-glucosaminide (1-&gt;4)-beta-linkages in chitin and chitodextrins.. Hydrolyzes chitin and plays a role in defense against fungal pathogens containing chitin. Its overexpression confers enhanced resistance to sheath blight pathogen (R.solani). The sequence is that of Chitinase 2 (Cht2) from Oryza sativa subsp. japonica (Rice).